The chain runs to 176 residues: Cytochrome c oxidase subunit 4 isoform 2, mitochondrial (176 aa).

A mitochondrion-targeting transit peptide spans 1 to 28 (MLRLTAGRVRSLLAGRATAAFSTSSARM). Residues 29–106 (ASHDLEVAES…TYSEMKQPSS (78 aa)) lie on the Mitochondrial matrix side of the membrane. Residues 107–132 (EWKTVFGGIFIFLGFTGLVVWWQALY) form a helical membrane-spanning segment. The Mitochondrial intermembrane segment spans residues 133 to 176 (VYPPRPRTFDDEWKAKQLKRMLDMRVNPIEGFSAKWDYEKGQWK).

It belongs to the cytochrome c oxidase IV family. Component of the cytochrome c oxidase (complex IV, CIV), a multisubunit enzyme composed of 14 subunits. The complex is composed of a catalytic core of 3 subunits MT-CO1, MT-CO2 and MT-CO3, encoded in the mitochondrial DNA, and 11 supernumerary subunits COX4I, COX5A, COX5B, COX6A, COX6B, COX6C, COX7A, COX7B, COX7C, COX8 and NDUFA4, which are encoded in the nuclear genome. The complex exists as a monomer or a dimer and forms supercomplexes (SCs) in the inner mitochondrial membrane with NADH-ubiquinone oxidoreductase (complex I, CI) and ubiquinol-cytochrome c oxidoreductase (cytochrome b-c1 complex, complex III, CIII), resulting in different assemblies (supercomplex SCI(1)III(2)IV(1) and megacomplex MCI(2)III(2)IV(2)).

The protein resides in the mitochondrion inner membrane. It functions in the pathway energy metabolism; oxidative phosphorylation. Functionally, component of the cytochrome c oxidase, the last enzyme in the mitochondrial electron transport chain which drives oxidative phosphorylation. The respiratory chain contains 3 multisubunit complexes succinate dehydrogenase (complex II, CII), ubiquinol-cytochrome c oxidoreductase (cytochrome b-c1 complex, complex III, CIII) and cytochrome c oxidase (complex IV, CIV), that cooperate to transfer electrons derived from NADH and succinate to molecular oxygen, creating an electrochemical gradient over the inner membrane that drives transmembrane transport and the ATP synthase. Cytochrome c oxidase is the component of the respiratory chain that catalyzes the reduction of oxygen to water. Electrons originating from reduced cytochrome c in the intermembrane space (IMS) are transferred via the dinuclear copper A center (CU(A)) of subunit 2 and heme A of subunit 1 to the active site in subunit 1, a binuclear center (BNC) formed by heme A3 and copper B (CU(B)). The BNC reduces molecular oxygen to 2 water molecules using 4 electrons from cytochrome c in the IMS and 4 protons from the mitochondrial matrix. This Thunnus obesus (Bigeye tuna) protein is Cytochrome c oxidase subunit 4 isoform 2, mitochondrial.